We begin with the raw amino-acid sequence, 115 residues long: Parathyroid hormone (115 aa).

Positions Met1–Gly25 are cleaved as a signal peptide. A propeptide spanning residues Lys26–Arg31 is cleaved from the precursor. The segment at Arg51–Gly69 is important for receptor binding. A disordered region spans residues Glu76–Gly101.

Belongs to the parathyroid hormone family. As to quaternary structure, interacts with PTH1R (via N-terminal extracellular domain). Hypothalamus and parathyroid gland.

It localises to the secreted. Its function is as follows. Parathyroid hormone elevates calcium level by dissolving the salts in bone and preventing their renal excretion. Acts by binding to its receptor, PTH1R, activating G protein-coupled receptor signaling. Stimulates [1-14C]-2-deoxy-D-glucose (2DG) transport and glycogen synthesis in osteoblastic cells. This Rattus norvegicus (Rat) protein is Parathyroid hormone (Pth).